The following is a 676-amino-acid chain: Ion-translocating oxidoreductase complex subunit C (676 aa).

4Fe-4S ferredoxin-type domains are found at residues glycine 369–tyrosine 397 and lysine 407–phenylalanine 436. [4Fe-4S] cluster-binding residues include cysteine 377, cysteine 380, cysteine 383, cysteine 387, cysteine 416, cysteine 419, cysteine 422, and cysteine 426. The disordered stretch occupies residues alanine 600–lysine 652. Low complexity predominate over residues glutamine 605–glutamine 615.

This sequence belongs to the 4Fe4S bacterial-type ferredoxin family. RnfC subfamily. As to quaternary structure, the complex is composed of six subunits: RsxA, RsxB, RsxC, RsxD, RsxE and RsxG. Requires [4Fe-4S] cluster as cofactor.

The protein localises to the cell inner membrane. Part of a membrane-bound complex that couples electron transfer with translocation of ions across the membrane. Required to maintain the reduced state of SoxR. In Escherichia coli (strain SMS-3-5 / SECEC), this protein is Ion-translocating oxidoreductase complex subunit C.